Reading from the N-terminus, the 397-residue chain is Tryptophan synthase beta chain (397 aa).

Residue K91 is modified to N6-(pyridoxal phosphate)lysine.

This sequence belongs to the TrpB family. In terms of assembly, tetramer of two alpha and two beta chains. Pyridoxal 5'-phosphate serves as cofactor.

It carries out the reaction (1S,2R)-1-C-(indol-3-yl)glycerol 3-phosphate + L-serine = D-glyceraldehyde 3-phosphate + L-tryptophan + H2O. It functions in the pathway amino-acid biosynthesis; L-tryptophan biosynthesis; L-tryptophan from chorismate: step 5/5. In terms of biological role, the beta subunit is responsible for the synthesis of L-tryptophan from indole and L-serine. This Bacillus thuringiensis (strain Al Hakam) protein is Tryptophan synthase beta chain.